A 428-amino-acid polypeptide reads, in one-letter code: Histidinol dehydrogenase (428 aa).

3 residues coordinate substrate: S234, Q256, and H259. Zn(2+) is bound by residues Q256 and H259. Active-site proton acceptor residues include E323 and H324. Residues H324, D357, E411, and H416 each contribute to the substrate site. D357 serves as a coordination point for Zn(2+). Zn(2+) is bound at residue H416.

It belongs to the histidinol dehydrogenase family. Zn(2+) is required as a cofactor.

The enzyme catalyses L-histidinol + 2 NAD(+) + H2O = L-histidine + 2 NADH + 3 H(+). Its pathway is amino-acid biosynthesis; L-histidine biosynthesis; L-histidine from 5-phospho-alpha-D-ribose 1-diphosphate: step 9/9. Its function is as follows. Catalyzes the sequential NAD-dependent oxidations of L-histidinol to L-histidinaldehyde and then to L-histidine. The sequence is that of Histidinol dehydrogenase from Campylobacter jejuni (strain RM1221).